We begin with the raw amino-acid sequence, 169 residues long: MYTSGYANRSSSFPTTTHNAARTATENAAAGLVSEVVYHEDQPMMAQLLLLPLLRQLGQQSRWQLWLTPQQKLSREWVQSSGLPLTKVMQISQLAPRHTLESMIRALRTGNYSVVIGWMTEELTEEEHASLVEAAKVGNAVGFIMRPVRAHALSRRQHSGLKIHSNLYH.

The segment at 106 to 112 (ALRTGNY) is ftsZ binding. Positions 162–169 (KIHSNLYH) are lon protease binding.

It belongs to the SulA family. As to quaternary structure, interacts with FtsZ. In terms of processing, is rapidly cleaved and degraded by the Lon protease once DNA damage is repaired.

Component of the SOS system and an inhibitor of cell division. Accumulation of SulA causes rapid cessation of cell division and the appearance of long, non-septate filaments. In the presence of GTP, binds a polymerization-competent form of FtsZ in a 1:1 ratio, thus inhibiting FtsZ polymerization and therefore preventing it from participating in the assembly of the Z ring. This mechanism prevents the premature segregation of damaged DNA to daughter cells during cell division. This is Cell division inhibitor SulA from Salmonella dublin (strain CT_02021853).